Here is a 124-residue protein sequence, read N- to C-terminus: Group 1 truncated hemoglobin GlbN (124 aa).

Heme is bound by residues histidine 46, histidine 70, and histidine 117.

It belongs to the truncated hemoglobin family. Group I subfamily. In terms of assembly, monomer. It depends on heme as a cofactor.

Functionally, forms a very stable complex with oxygen. The oxygen dissociation rate is 0.011 sec(-1). The polypeptide is Group 1 truncated hemoglobin GlbN (glbN) (Synechocystis sp. (strain ATCC 27184 / PCC 6803 / Kazusa)).